Reading from the N-terminus, the 184-residue chain is NADH-quinone oxidoreductase subunit B (184 aa).

4 residues coordinate [4Fe-4S] cluster: cysteine 63, cysteine 64, cysteine 128, and cysteine 158.

The protein belongs to the complex I 20 kDa subunit family. As to quaternary structure, NDH-1 is composed of 14 different subunits. Subunits NuoB, C, D, E, F, and G constitute the peripheral sector of the complex. It depends on [4Fe-4S] cluster as a cofactor.

Its subcellular location is the cell inner membrane. The catalysed reaction is a quinone + NADH + 5 H(+)(in) = a quinol + NAD(+) + 4 H(+)(out). Its function is as follows. NDH-1 shuttles electrons from NADH, via FMN and iron-sulfur (Fe-S) centers, to quinones in the respiratory chain. The immediate electron acceptor for the enzyme in this species is believed to be ubiquinone. Couples the redox reaction to proton translocation (for every two electrons transferred, four hydrogen ions are translocated across the cytoplasmic membrane), and thus conserves the redox energy in a proton gradient. The sequence is that of NADH-quinone oxidoreductase subunit B from Xanthomonas axonopodis pv. citri (strain 306).